Here is a 244-residue protein sequence, read N- to C-terminus: HTH-type transcriptional regulator Cmr (244 aa).

41-160 (GSAPLHRDDV…RRWLSSVAQR (120 aa)) contacts a nucleoside 3',5'-cyclic phosphate. In terms of domain architecture, HTH crp-type spans 174–237 (RPLPAQVAQL…YAVIEITDQH (64 aa)). The segment at residues 197–216 (QRTLAAMLGAQRPSINKILK) is a DNA-binding region (H-T-H motif).

Functionally, positively regulates the expression of at least groEL2. This chain is HTH-type transcriptional regulator Cmr (cmr), found in Mycobacterium tuberculosis (strain CDC 1551 / Oshkosh).